The chain runs to 611 residues: Chaperone protein DnaK (611 aa).

A Phosphothreonine; by autocatalysis modification is found at threonine 173. The span at 577 to 591 shows a compositional bias: low complexity; it reads AAAAQAAQGGEADAG. Residues 577-611 form a disordered region; the sequence is AAAAQAAQGGEADAGAGKKDDGVVDADFEEVKDDK. Over residues 599-611 the composition is skewed to acidic residues; sequence VVDADFEEVKDDK.

The protein belongs to the heat shock protein 70 family.

Acts as a chaperone. This Lysinibacillus sphaericus (strain C3-41) protein is Chaperone protein DnaK.